The chain runs to 259 residues: Deoxyribose-phosphate aldolase (259 aa).

Aspartate 102 functions as the Proton donor/acceptor in the catalytic mechanism. The active-site Schiff-base intermediate with acetaldehyde is the lysine 167. Lysine 201 serves as the catalytic Proton donor/acceptor.

The protein belongs to the DeoC/FbaB aldolase family. DeoC type 2 subfamily.

The protein resides in the cytoplasm. The enzyme catalyses 2-deoxy-D-ribose 5-phosphate = D-glyceraldehyde 3-phosphate + acetaldehyde. It participates in carbohydrate degradation; 2-deoxy-D-ribose 1-phosphate degradation; D-glyceraldehyde 3-phosphate and acetaldehyde from 2-deoxy-alpha-D-ribose 1-phosphate: step 2/2. In terms of biological role, catalyzes a reversible aldol reaction between acetaldehyde and D-glyceraldehyde 3-phosphate to generate 2-deoxy-D-ribose 5-phosphate. The polypeptide is Deoxyribose-phosphate aldolase (Escherichia coli (strain SMS-3-5 / SECEC)).